Here is a 519-residue protein sequence, read N- to C-terminus: 4-nitrophenol 2-monooxygenase, oxygenase component (519 aa).

This sequence belongs to the FADH(2)-utilizing monooxygenase family. Homotetramer. 4-nitrophenol 2-monooxygenase complex consists of an oxygenase component NphA1 and a flavin reductase component NphA2. It depends on FAD as a cofactor.

It catalyses the reaction 4-nitrophenol + NADH + O2 + H(+) = 4-nitrocatechol + NAD(+) + H2O. Its activity is regulated as follows. Partially inhibited by concentrations of FAD above 10 uM and completely inhibited by concentrations above 50 uM. In terms of biological role, utilizes the flavins supplied by NphA2 to catalyze the degradation of 4-nitrophenol (4-NP) via 4-nitrocatechol (4-NC) which is used as the sole carbon, nitrogen, and energy source. Can also degrade phenol and 4-chlorophenol as rapidly as 4-NP. The chain is 4-nitrophenol 2-monooxygenase, oxygenase component (nphA1) from Rhodococcus sp.